The chain runs to 97 residues: Small nuclear ribonucleoprotein Sm D3 (97 aa).

A Sm domain is found at 3-75 (LCIKLLHETQ…IRFLIVPDML (73 aa)).

This sequence belongs to the snRNP core protein family. In terms of assembly, belongs to the 40S cdc5-associated complex (or cwf complex), a spliceosome sub-complex reminiscent of a late-stage spliceosome composed of the U2, U5 and U6 snRNAs and at least brr2, cdc5, cwf2/prp3, cwf3/syf1, cwf4/syf3, cwf5/ecm2, spp42/cwf6, cwf7/spf27, cwf8, cwf9, cwf10, cwf11, cwf12, prp45/cwf13, cwf14, cwf15, cwf16, cwf17, cwf18, cwf19, cwf20, cwf21, cwf22, cwf23, cwf24, cwf25, cwf26, cyp7/cwf27, cwf28, cwf29/ist3, lea1, msl1, prp5/cwf1, prp10, prp12/sap130, prp17, prp22, sap61, sap62, sap114, sap145, slu7, smb1, smd1, smd3, smf1, smg1 and syf2. Interacts with saf5; the interaction is direct.

It is found in the nucleus. The protein resides in the cytoplasm. Its subcellular location is the cytosol. In terms of biological role, plays a role in pre-mRNA splicing as a core component of the spliceosomal U1, U2, U4 and U5 small nuclear ribonucleoproteins (snRNPs), the building blocks of the spliceosome. In Schizosaccharomyces pombe (strain 972 / ATCC 24843) (Fission yeast), this protein is Small nuclear ribonucleoprotein Sm D3 (smd3).